A 347-amino-acid polypeptide reads, in one-letter code: Heat-inducible transcription repressor HrcA (347 aa).

The protein belongs to the HrcA family.

Negative regulator of class I heat shock genes (grpE-dnaK-dnaJ and groELS operons). Prevents heat-shock induction of these operons. This Lactiplantibacillus plantarum (strain ATCC BAA-793 / NCIMB 8826 / WCFS1) (Lactobacillus plantarum) protein is Heat-inducible transcription repressor HrcA.